We begin with the raw amino-acid sequence, 180 residues long: Ribosome maturation factor RimM (180 aa).

In terms of domain architecture, PRC barrel spans 103-176; that stretch reads GDIWWDRDLV…RIVVDPPPGL (74 aa).

The protein belongs to the RimM family. In terms of assembly, binds ribosomal protein uS19.

It is found in the cytoplasm. Functionally, an accessory protein needed during the final step in the assembly of 30S ribosomal subunit, possibly for assembly of the head region. Essential for efficient processing of 16S rRNA. May be needed both before and after RbfA during the maturation of 16S rRNA. It has affinity for free ribosomal 30S subunits but not for 70S ribosomes. This chain is Ribosome maturation factor RimM, found in Frankia alni (strain DSM 45986 / CECT 9034 / ACN14a).